The sequence spans 556 residues: Methyltransferase/ribosomally synthesized type II borosin cyclic peptide precursor pgiMA1 (556 aa).

The segment at methionine 1–leucine 250 is methyltransferase domain. Catalysis depends on residues arginine 74, tyrosine 78, and tyrosine 100. Residues tyrosine 100, histidine 102, valine 105, glutamine 174, glycine 212, serine 243, and threonine 244 each coordinate S-adenosyl-L-methionine. Residues threonine 251–arginine 377 form a clasp domain region. The interval alanine 378–glycine 386 is precursor leader. An N-methylaspartate mark is found at aspartate 421, aspartate 434, aspartate 447, aspartate 460, aspartate 473, aspartate 486, aspartate 499, aspartate 512, aspartate 525, and aspartate 538. The propeptide occupies alanine 543–methionine 556.

It in the N-terminal section; belongs to the precorrin methyltransferase family. Homodimer. In terms of processing, pgiMA1 automethylates at Asp-421, Asp-434, Asp-447, Asp-460, Asp-473, Asp-486, Asp-499, Asp-512, Asp-525 and Asp-538 before being processed, probably by the M64 family peptidase found in the genes surrounding PgiMA1, to release methylated peptides which then undergos macrocyclization with the N-terminus of the modified core peptides. Peptide backbone alpha-N-methylations change the physicochemical properties of amide bonds to provide structural constraints and other favorable characteristics including biological membrane permeability to peptides.

It functions in the pathway secondary metabolite biosynthesis. In terms of biological role, fusion protein of the methyltransferase pgiM1 and 12 type II borosin core peptides; part of the gene cluster that mediates the biosynthesis of a type II borosin, a highly methylated cyclic peptide with potent biological activities. Type II borosins derive from the C-terminus of the fusion protein, and it is the same protein that methylates its own C-terminus using S-adenosyl methionine (SAM). The C-terminus is subsequently cleaved off and macrocyclized by a prolyloligopeptidase to give the final product. This chain is Methyltransferase/ribosomally synthesized type II borosin cyclic peptide precursor pgiMA1, found in Phlebiopsis gigantea (strain 11061_1 CR5-6) (White-rot fungus).